Here is a 141-residue protein sequence, read N- to C-terminus: Large ribosomal subunit protein uL11 (141 aa).

The protein belongs to the universal ribosomal protein uL11 family. In terms of assembly, part of the ribosomal stalk of the 50S ribosomal subunit. Interacts with L10 and the large rRNA to form the base of the stalk. L10 forms an elongated spine to which L12 dimers bind in a sequential fashion forming a multimeric L10(L12)X complex. One or more lysine residues are methylated.

In terms of biological role, forms part of the ribosomal stalk which helps the ribosome interact with GTP-bound translation factors. The protein is Large ribosomal subunit protein uL11 of Listeria innocua serovar 6a (strain ATCC BAA-680 / CLIP 11262).